Reading from the N-terminus, the 279-residue chain is NAD kinase (279 aa).

Asp57 acts as the Proton acceptor in catalysis. NAD(+) is bound by residues 57-58 (DG), 133-134 (NE), Arg159, Asp161, 172-177 (TAYNKS), and Ala196.

Belongs to the NAD kinase family. A divalent metal cation serves as cofactor.

The protein resides in the cytoplasm. The enzyme catalyses NAD(+) + ATP = ADP + NADP(+) + H(+). Functionally, involved in the regulation of the intracellular balance of NAD and NADP, and is a key enzyme in the biosynthesis of NADP. Catalyzes specifically the phosphorylation on 2'-hydroxyl of the adenosine moiety of NAD to yield NADP. This chain is NAD kinase, found in Streptococcus thermophilus (strain CNRZ 1066).